Reading from the N-terminus, the 226-residue chain is Phosphoglycolate phosphatase (226 aa).

D9 (nucleophile) is an active-site residue. D9 and D11 together coordinate Mg(2+). Substrate is bound at residue K150. Mg(2+)-binding residues include D173 and D177.

This sequence belongs to the archaeal SPP-like hydrolase family. Requires Mg(2+) as cofactor.

The enzyme catalyses 2-phosphoglycolate + H2O = glycolate + phosphate. Functionally, catalyzes the dephosphorylation of 2-phosphoglycolate. The sequence is that of Phosphoglycolate phosphatase from Methanosarcina mazei (strain ATCC BAA-159 / DSM 3647 / Goe1 / Go1 / JCM 11833 / OCM 88) (Methanosarcina frisia).